Reading from the N-terminus, the 192-residue chain is Probable cobalt-precorrin-6B C(15)-methyltransferase (decarboxylating) (192 aa).

Residues T17, 41-45 (GCGTG), D62, and A91 contribute to the S-adenosyl-L-methionine site.

Belongs to the methyltransferase superfamily. Archaeal-type CbiT family. In terms of assembly, homotetramer.

The enzyme catalyses Co-precorrin-6B + S-adenosyl-L-methionine = Co-precorrin-7 + S-adenosyl-L-homocysteine + CO2. The protein operates within cofactor biosynthesis; adenosylcobalamin biosynthesis; cob(II)yrinate a,c-diamide from sirohydrochlorin (anaerobic route): step 8/10. Functionally, catalyzes the methylation of C-15 in cobalt-precorrin-6B followed by the decarboxylation of C-12 to form cobalt-precorrin-7. This is Probable cobalt-precorrin-6B C(15)-methyltransferase (decarboxylating) from Methanothermobacter thermautotrophicus (strain ATCC 29096 / DSM 1053 / JCM 10044 / NBRC 100330 / Delta H) (Methanobacterium thermoautotrophicum).